A 360-amino-acid chain; its full sequence is Phospho-N-acetylmuramoyl-pentapeptide-transferase (360 aa).

10 helical membrane passes run 3–23 (SILVGAAVALVVSILFTPYLI), 52–72 (MGGVAILVAMWAGYLVAHLTV), 81–101 (GLLVLGLTTALGIVGFLDDFI), 115–135 (AKLVGQLVASVLFAVLAMQFA), 153–173 (ITVISFGSVGFVIFAYIAISG), 187–207 (LAGGTAAMVLAIYVVISFWQF), 230–250 (IALVAGAAMAACVGFLWWNAA), 254–274 (IFMGDTGSLALGGLLAGLSMV), 282–302 (IIIGGLFVVEALSVVMQIVVF), and 333–353 (FWVLAAISAMFGLGLFYADWL).

The protein belongs to the glycosyltransferase 4 family. MraY subfamily. The cofactor is Mg(2+).

It localises to the cell membrane. The enzyme catalyses UDP-N-acetyl-alpha-D-muramoyl-L-alanyl-gamma-D-glutamyl-meso-2,6-diaminopimeloyl-D-alanyl-D-alanine + di-trans,octa-cis-undecaprenyl phosphate = di-trans,octa-cis-undecaprenyl diphospho-N-acetyl-alpha-D-muramoyl-L-alanyl-D-glutamyl-meso-2,6-diaminopimeloyl-D-alanyl-D-alanine + UMP. Its pathway is cell wall biogenesis; peptidoglycan biosynthesis. Catalyzes the initial step of the lipid cycle reactions in the biosynthesis of the cell wall peptidoglycan: transfers peptidoglycan precursor phospho-MurNAc-pentapeptide from UDP-MurNAc-pentapeptide onto the lipid carrier undecaprenyl phosphate, yielding undecaprenyl-pyrophosphoryl-MurNAc-pentapeptide, known as lipid I. This Saccharopolyspora erythraea (strain ATCC 11635 / DSM 40517 / JCM 4748 / NBRC 13426 / NCIMB 8594 / NRRL 2338) protein is Phospho-N-acetylmuramoyl-pentapeptide-transferase.